The primary structure comprises 148 residues: FAD synthase (148 aa).

ATP-binding positions include Val14–Phe15, His19–His22, and Asp100.

Belongs to the archaeal FAD synthase family. As to quaternary structure, homodimer. It depends on a divalent metal cation as a cofactor.

It catalyses the reaction FMN + ATP + H(+) = FAD + diphosphate. The protein operates within cofactor biosynthesis; FAD biosynthesis; FAD from FMN: step 1/1. Its function is as follows. Catalyzes the transfer of the AMP portion of ATP to flavin mononucleotide (FMN) to produce flavin adenine dinucleotide (FAD) coenzyme. The polypeptide is FAD synthase (Thermococcus sibiricus (strain DSM 12597 / MM 739)).